We begin with the raw amino-acid sequence, 634 residues long: MVVMKLITMKIFSVLLLLCFFVTCSLSSEPRNPEVEALINIKNELHDPHGVFKNWDEFSVDPCSWTMISCSSDNLVIGLGAPSQSLSGTLSGSIGNLTNLRQVSLQNNNISGKIPPEICSLPKLQTLDLSNNRFSGEIPGSVNQLSNLQYLRLNNNSLSGPFPASLSQIPHLSFLDLSYNNLRGPVPKFPARTFNVAGNPLICKNSLPEICSGSISASPLSVSLRSSSGRRTNILAVALGVSLGFAVSVILSLGFIWYRKKQRRLTMLRISDKQEEGLLGLGNLRSFTFRELHVATDGFSSKSILGAGGFGNVYRGKFGDGTVVAVKRLKDVNGTSGNSQFRTELEMISLAVHRNLLRLIGYCASSSERLLVYPYMSNGSVASRLKAKPALDWNTRKKIAIGAARGLFYLHEQCDPKIIHRDVKAANILLDEYFEAVVGDFGLAKLLNHEDSHVTTAVRGTVGHIAPEYLSTGQSSEKTDVFGFGILLLELITGMRALEFGKSVSQKGAMLEWVRKLHKEMKVEELVDRELGTTYDRIEVGEMLQVALLCTQFLPAHRPKMSEVVQMLEGDGLAERWAASHDHSHFYHANMSYRTITSTDGNNQTKHLFGSSGFEDEDDNQALDSFAMELSGPR.

Positions 1-27 (MVVMKLITMKIFSVLLLLCFFVTCSLS) are cleaved as a signal peptide. The Extracellular segment spans residues 28–236 (SEPRNPEVEA…SSGRRTNILA (209 aa)). 2 N-linked (GlcNAc...) asparagine glycosylation sites follow: N96 and N109. LRR repeat units follow at residues 99-121 (NLRQVSLQNNNISGKIPPEICSL), 123-145 (KLQTLDLSNNRFSGEIPGSVNQL), 147-167 (NLQYLRLNNNSLSGPFPASLS), and 171-193 (HLSFLDLSYNNLRGPVPKFPART). N155 carries N-linked (GlcNAc...) asparagine glycosylation. Residues 237 to 257 (VALGVSLGFAVSVILSLGFIW) traverse the membrane as a helical segment. Over 258-634 (YRKKQRRLTM…SFAMELSGPR (377 aa)) the chain is Cytoplasmic. T296 bears the Phosphothreonine mark. The Protein kinase domain maps to 299–554 (FSSKSILGAG…QVALLCTQFL (256 aa)). 305 to 313 (LGAGGFGNV) serves as a coordination point for ATP. At T322 the chain carries Phosphothreonine. K327 is an ATP binding site. S380 and S383 each carry phosphoserine. Residue T395 is modified to Phosphothreonine. Catalysis depends on D422, which acts as the Proton acceptor. Phosphothreonine is present on residues T455, T456, and T461. Y469 is subject to Phosphotyrosine. A Phosphoserine modification is found at S471. T472 bears the Phosphothreonine mark. Phosphoserine is present on S476. T551 is modified (phosphothreonine).

The protein belongs to the protein kinase superfamily. Ser/Thr protein kinase family.

It is found in the membrane. It catalyses the reaction L-seryl-[protein] + ATP = O-phospho-L-seryl-[protein] + ADP + H(+). The catalysed reaction is L-threonyl-[protein] + ATP = O-phospho-L-threonyl-[protein] + ADP + H(+). This chain is Probable LRR receptor-like serine/threonine-protein kinase At2g23950, found in Arabidopsis thaliana (Mouse-ear cress).